A 259-amino-acid polypeptide reads, in one-letter code: Hydroxyacylglutathione hydrolase (259 aa).

The Zn(2+) site is built by His-56, His-58, Asp-60, His-61, His-112, Asp-133, and His-171. A disordered region spans residues 220-243 (NPFLRTGETSVKEKADERSDAQNT). The segment covering 229-239 (SVKEKADERSD) has biased composition (basic and acidic residues).

It belongs to the metallo-beta-lactamase superfamily. Glyoxalase II family. As to quaternary structure, monomer. Requires Zn(2+) as cofactor.

It carries out the reaction an S-(2-hydroxyacyl)glutathione + H2O = a 2-hydroxy carboxylate + glutathione + H(+). It participates in secondary metabolite metabolism; methylglyoxal degradation; (R)-lactate from methylglyoxal: step 2/2. Thiolesterase that catalyzes the hydrolysis of S-D-lactoyl-glutathione to form glutathione and D-lactic acid. In Pseudomonas syringae pv. syringae (strain B728a), this protein is Hydroxyacylglutathione hydrolase.